The following is a 182-amino-acid chain: Adenine phosphoribosyltransferase (182 aa).

It belongs to the purine/pyrimidine phosphoribosyltransferase family. As to quaternary structure, homodimer.

It is found in the cytoplasm. The enzyme catalyses AMP + diphosphate = 5-phospho-alpha-D-ribose 1-diphosphate + adenine. It functions in the pathway purine metabolism; AMP biosynthesis via salvage pathway; AMP from adenine: step 1/1. Its function is as follows. Catalyzes a salvage reaction resulting in the formation of AMP, that is energically less costly than de novo synthesis. This is Adenine phosphoribosyltransferase from Campylobacter jejuni subsp. jejuni serotype O:23/36 (strain 81-176).